The chain runs to 473 residues: MGYAMSRFETDVSVIFSSSSDSETSHDSLINKPVKNLDHEIAQLTRLRSAPHENLSRDLLVKRVLPLSTMKMLAGREANVSGRGRFSSADCCHVVSRHLPVNDPCVVDQMTSRVYLSQFSTDGSLFIAGFQGCHIRIYNVDKGWKVQNDIIAKCVRWTITDASLSPDQKFLAYASLTPIAHIVKFGSAATESHANVTDIHDGLDFSSNDDGGYSFGVFSIKFSTDGREIVAGTSDESICVYDLEADRLSLRISAHESDVNSVCFADESGHLIYSGSDDNLCKVWDRRCFNAKGKPAGILMGHLEGITFIDSRGDGRYFISNGKDQTIKLWDIRKMSSNAGGTIQSRNSEWDYRWMEYPQEARDLKHPSDLSGATYKGHSVLCTLIRCYFSPDYSTGQKYIYTGSHDANVYIYDLVTGDQVSTLQYHKATVRDCSWHPNYPMLVSSSFDGEIVKWEYRGNDEAPVQGNNQRLQR.

WD repeat units follow at residues 212-242 (GYSF…CVYD), 254-285 (AHES…KVWD), 301-331 (GHLE…KLWD), 377-413 (GHSV…YIYD), and 425-455 (YHKA…VKWE).

It belongs to the WD repeat LEC14B family.

This is LEC14B protein from Lithospermum erythrorhizon (Purple gromwell).